The chain runs to 185 residues: Ribosome maturation factor RimP (185 aa).

The segment at 162-185 is disordered; it reads VRLERAADGAPERGGDRGDTEESR.

This sequence belongs to the RimP family.

The protein resides in the cytoplasm. Functionally, required for maturation of 30S ribosomal subunits. This chain is Ribosome maturation factor RimP, found in Saccharopolyspora erythraea (strain ATCC 11635 / DSM 40517 / JCM 4748 / NBRC 13426 / NCIMB 8594 / NRRL 2338).